A 206-amino-acid polypeptide reads, in one-letter code: RNA pyrophosphohydrolase (206 aa).

A Nudix hydrolase domain is found at 6–150 (GYRPNVGIVI…KRDVYRKVMK (145 aa)). A Nudix box motif is present at residues 38–59 (GGINEGENIETAMYRELYEEVG). Residues 162–191 (KPETVEKPRVERTEKRDFQKRDNQKREFRK) show a composition bias toward basic and acidic residues. The tract at residues 162–206 (KPETVEKPRVERTEKRDFQKRDNQKREFRKSARMWNNSHQKGKAQ) is disordered.

This sequence belongs to the Nudix hydrolase family. RppH subfamily. Requires a divalent metal cation as cofactor.

Accelerates the degradation of transcripts by removing pyrophosphate from the 5'-end of triphosphorylated RNA, leading to a more labile monophosphorylated state that can stimulate subsequent ribonuclease cleavage. This is RNA pyrophosphohydrolase from Actinobacillus pleuropneumoniae serotype 5b (strain L20).